A 215-amino-acid chain; its full sequence is Large ribosomal subunit protein uL1 (215 aa).

Belongs to the universal ribosomal protein uL1 family. In terms of assembly, part of the 50S ribosomal subunit.

In terms of biological role, binds directly to 23S rRNA. Probably involved in E site tRNA release. Functionally, protein L1 is also a translational repressor protein, it controls the translation of its operon by binding to its mRNA. This chain is Large ribosomal subunit protein uL1, found in Archaeoglobus fulgidus (strain ATCC 49558 / DSM 4304 / JCM 9628 / NBRC 100126 / VC-16).